The chain runs to 87 residues: Small ribosomal subunit protein bS20 (87 aa).

The tract at residues 1–22 (MAHHKSALKRIKQNKRKQFRNK) is disordered.

This sequence belongs to the bacterial ribosomal protein bS20 family.

Functionally, binds directly to 16S ribosomal RNA. The protein is Small ribosomal subunit protein bS20 of Geobacter metallireducens (strain ATCC 53774 / DSM 7210 / GS-15).